The primary structure comprises 515 residues: Probable cytosol aminopeptidase (515 aa).

Residues K274 and D279 each contribute to the Mn(2+) site. K286 is a catalytic residue. Mn(2+) contacts are provided by D297, D356, and E358. Residue R360 is part of the active site.

It belongs to the peptidase M17 family. Mn(2+) serves as cofactor.

Its subcellular location is the cytoplasm. The catalysed reaction is Release of an N-terminal amino acid, Xaa-|-Yaa-, in which Xaa is preferably Leu, but may be other amino acids including Pro although not Arg or Lys, and Yaa may be Pro. Amino acid amides and methyl esters are also readily hydrolyzed, but rates on arylamides are exceedingly low.. It catalyses the reaction Release of an N-terminal amino acid, preferentially leucine, but not glutamic or aspartic acids.. Functionally, presumably involved in the processing and regular turnover of intracellular proteins. Catalyzes the removal of unsubstituted N-terminal amino acids from various peptides. In Desulforapulum autotrophicum (strain ATCC 43914 / DSM 3382 / VKM B-1955 / HRM2) (Desulfobacterium autotrophicum), this protein is Probable cytosol aminopeptidase.